We begin with the raw amino-acid sequence, 378 residues long: MSAAEVADHYNNVRQAGIQDRKESRIFFMRNMNNWIKSQLINDAMKLVNENGVKSPVVLDIACGKGGDLRKWDITGAKHVVMADVADVSIQQAEERYKTMHKYPHDIFGAQFIVADCTKENLDDKIEIKEPFDLVSCQFAMHYSFVDEDSARTFLKNAVGKLKLGGVFIGTLPDADRIVWAVRNGTEGKFANDVCKITYEKVDELSEGNVPLFGAKFHFSLDEQVNCPEFLAYFSLVKHLLEEHDMELLFVHNFAEAITNWLVPGRRLLESMKGLETFPNRNLSGKTDEEYLEAKAKIDSLGDNVPKFVGTLSKSEWEAICMYLVFGFRKKKTTEKNLESEAPEIKKVTPVPLNEDTDKTAEKNEERIEEKEENPSHC.

Residues 24-331 (SRIFFMRNMN…MYLVFGFRKK (308 aa)) enclose the mRNA cap 0 methyltransferase domain. MRNA is bound at residue 33-34 (NN). Positions 37, 62, 84, 116, 138, and 143 each coordinate S-adenosyl-L-methionine. Composition is skewed to basic and acidic residues over residues 335-347 (EKNLESEAPEIKK) and 356-378 (DTDKTAEKNEERIEEKEENPSHC). The interval 335 to 378 (EKNLESEAPEIKKVTPVPLNEDTDKTAEKNEERIEEKEENPSHC) is disordered.

This sequence belongs to the class I-like SAM-binding methyltransferase superfamily. mRNA cap 0 methyltransferase family.

Its subcellular location is the nucleus. It carries out the reaction a 5'-end (5'-triphosphoguanosine)-ribonucleoside in mRNA + S-adenosyl-L-methionine = a 5'-end (N(7)-methyl 5'-triphosphoguanosine)-ribonucleoside in mRNA + S-adenosyl-L-homocysteine. Functionally, mRNA-capping methyltransferase that methylates the N7 position of the added guanosine to the 5'-cap structure of mRNAs. Binds RNA containing 5'-terminal GpppC. This chain is mRNA cap guanine-N(7) methyltransferase, found in Caenorhabditis briggsae.